Here is a 2145-residue protein sequence, read N- to C-terminus: Adenylate cyclase (2145 aa).

Disordered regions lie at residues 1-115, 127-236, 266-307, and 329-547; these read MPRN…RMSD, DPAG…SGAR, GKEH…PVPK, and VRDI…GPTD. Composition is skewed to low complexity over residues 7–23, 35–68, and 89–107; these read SSRFSSMTGSSTDSARS, PSASSSSPFAASSNQTSNASRSASHGSRRAAPSR, and SPTSTSPCVSPSSITSSNS. 2 stretches are compositionally biased toward polar residues: residues 134 to 148 and 159 to 205; these read SRTQQNNPSSGSLSQ and PASS…TESP. Residues 217 to 234 show a composition bias toward low complexity; sequence SIASITTTASSQGSRASG. The segment covering 269–281 has biased composition (basic residues); the sequence is HRSHSYSHARPHR. Residues 343-357 are compositionally biased toward polar residues; that stretch reads NDSSQQNNPPKTSGS. Over residues 377–403 the composition is skewed to basic and acidic residues; sequence KSNEDPRSLRPTVSREDSTISVPKDRN. The segment covering 404–441 has biased composition (polar residues); it reads GSSTMYGTRSRAQSPAPSTTGSYWGHKSGSTDGQTSPG. Composition is skewed to basic and acidic residues over residues 454–466 and 495–511; these read RLKEKDDAPDLKK and ADGKYQPDVRDGIRPDL. Residues 637 to 727 enclose the Ras-associating domain; that stretch reads HNYCIRVFRA…IEDIGREDNS (91 aa). LRR repeat units lie at residues 779–800, 803–824, 826–847, 850–871, 873–894, 896–917, 919–941, 943–964, 965–986, 987–1006, 1007–1028, 1030–1051, 1053–1074, 1076–1097, and 1099–1120; these read EIISLNLSRNLSLQVPRDFISV, NLRDIKFNNNEARALPKSFGYA, RLTMLDASNNRLESLESAALHN, GLLKLNLANNKLKQLPREFEAF, VLRTLNISSNLLNNFPPFLAKL, NLVDLDLSFNTIQSLPDNVGQM, SLERLVITNNELSGSLPPSFKNL, SLRELDIKYNAISNIDVISQLP, KLEILSATRNNISQFSGTFERV, RSIKLNWNPITKFEIKAPVP, TLKALNLSNAQLASIDESFHNM, NLERLELDKNYFVSLPAHIGNL, RLEYFSIAHNSVGELPPEIGCL, ELKRLDVRGNNIRKLPMELWWA, and KLDYLNASSNVLENFPKPASRA. Residues 1114–1226 form a disordered region; it reads PKPASRAPHP…SSRKDSSHTQ (113 aa). 2 stretches are compositionally biased toward low complexity: residues 1160–1179 and 1201–1217; these read RPSQASSSLLSVGPSPVPGG and SRSTTQSSTALATPTAS. 6 LRR repeats span residues 1235-1255, 1259-1280, 1283-1304, 1307-1328, 1330-1352, and 1359-1380; these read SLRYLYMADNQLDDDCFDQLC, NLRVLNLSYNDLSDMPQRSIKS, QLVELYLSGNELASLPADDLEE, MLQTLHINGNKFTNLPADISRA, KLTVFDCGSNSLKYNIANVPYDW, and NLRYLNLSGNRRLEIKQSSVPT. Residues 1432 to 1709 form the PPM-type phosphatase domain; the sequence is PYGMADTLGS…NKMTVQMLGV (278 aa). The interval 1718–1760 is disordered; that stretch reads RSRQHKGQSMPVYASLQDDGGSSTGMRRARKARDGPLDSTLGR. The region spanning 1773–1910 is the Guanylate cyclase domain; the sequence is AIVFTDIKNS…PMVNKASRIS (138 aa). The Mg(2+) site is built by Asp-1778 and Asp-1821.

This sequence belongs to the adenylyl cyclase class-3 family. Mg(2+) serves as cofactor.

It catalyses the reaction ATP = 3',5'-cyclic AMP + diphosphate. Functionally, plays essential roles in regulation of cellular metabolism by catalyzing the synthesis of a second messenger, cAMP. This Podospora anserina (Pleurage anserina) protein is Adenylate cyclase.